The sequence spans 258 residues: UPF0246 protein VV0659 (258 aa).

It belongs to the UPF0246 family.

This chain is UPF0246 protein VV0659, found in Vibrio vulnificus (strain YJ016).